Reading from the N-terminus, the 285-residue chain is Protoheme IX farnesyltransferase (285 aa).

A run of 9 helical transmembrane segments spans residues 8–28, 36–56, 80–100, 107–127, 133–153, 163–183, 209–229, 232–252, and 265–285; these read ITKP…FLFA, YVLF…ACVF, LLPV…GLSI, FISM…YTMF, FYST…GYTA, ILLF…ISIM, IFFY…LGYL, NFLL…YSNI, and FYFS…DVFF.

Belongs to the UbiA prenyltransferase family. Protoheme IX farnesyltransferase subfamily.

Its subcellular location is the cell membrane. It carries out the reaction heme b + (2E,6E)-farnesyl diphosphate + H2O = Fe(II)-heme o + diphosphate. It functions in the pathway porphyrin-containing compound metabolism; heme O biosynthesis; heme O from protoheme: step 1/1. Converts heme B (protoheme IX) to heme O by substitution of the vinyl group on carbon 2 of heme B porphyrin ring with a hydroxyethyl farnesyl side group. The sequence is that of Protoheme IX farnesyltransferase from Buchnera aphidicola subsp. Acyrthosiphon pisum (strain Tuc7).